A 180-amino-acid polypeptide reads, in one-letter code: Inosine/xanthosine triphosphatase (180 aa).

A substrate-binding site is contributed by 8 to 13; that stretch reads TTNPAK. Residues Asp38 and Glu68 each contribute to the Mg(2+) site. 68 to 69 contributes to the substrate binding site; sequence EA.

Belongs to the YjjX NTPase family. Homodimer. Mg(2+) serves as cofactor. Requires Mn(2+) as cofactor.

It catalyses the reaction XTP + H2O = XDP + phosphate + H(+). It carries out the reaction ITP + H2O = IDP + phosphate + H(+). Its function is as follows. Phosphatase that hydrolyzes non-canonical purine nucleotides such as XTP and ITP to their respective diphosphate derivatives. Probably excludes non-canonical purines from DNA/RNA precursor pool, thus preventing their incorporation into DNA/RNA and avoiding chromosomal lesions. The chain is Inosine/xanthosine triphosphatase from Yersinia pestis bv. Antiqua (strain Antiqua).